The chain runs to 91 residues: Elongation factor 1-beta (91 aa).

This sequence belongs to the EF-1-beta/EF-1-delta family.

Functionally, promotes the exchange of GDP for GTP in EF-1-alpha/GDP, thus allowing the regeneration of EF-1-alpha/GTP that could then be used to form the ternary complex EF-1-alpha/GTP/AAtRNA. The protein is Elongation factor 1-beta of Thermococcus gammatolerans (strain DSM 15229 / JCM 11827 / EJ3).